Reading from the N-terminus, the 2167-residue chain is SH3 and multiple ankyrin repeat domains protein 1 (2167 aa).

The disordered stretch occupies residues Met1 to Ser63. A compositionally biased stretch (low complexity) spans Ser17–Gly32. Over residues Pro33–Ala47 the composition is skewed to gly residues. Arg43 is subject to Omega-N-methylarginine. Tyr186 is modified (phosphotyrosine). ANK repeat units follow at residues Ser212–Phe242, Asp246–Tyr275, Arg279–Ile309, Asn313–Ala342, Ser346–Val375, and Asn379–Val407. Disordered stretches follow at residues Ser413–Pro432 and Pro454–Arg546. Residues Pro454 to Thr479 are compositionally biased toward low complexity. Residues Pro527 to Gly542 are compositionally biased toward gly residues. At Ser540 the chain carries Phosphoserine. At Arg544 the chain carries Omega-N-methylarginine. The SH3 domain occupies Val554–Asn613. The region spanning Thr663–Thr757 is the PDZ domain. 2 positions are modified to phosphoserine: Ser671 and Ser791. The segment at Ile841 to Leu894 is disordered. Ser898 carries the post-translational modification Phosphoserine. 2 disordered regions span residues Ser917–Thr1233 and Arg1245–Lys1290. Residues Ile928–Pro947 are compositionally biased toward pro residues. Arg958 is subject to Omega-N-methylarginine. The span at Pro969 to Gly980 shows a compositional bias: low complexity. The span at Ala1004–Pro1028 shows a compositional bias: basic residues. Arg1059 is modified (omega-N-methylarginine). Low complexity predominate over residues Ser1064–Ala1089. 2 positions are modified to omega-N-methylarginine: Arg1098 and Arg1109. 2 stretches are compositionally biased toward low complexity: residues Ser1132–Arg1146 and Ser1171–Thr1184. A compositionally biased stretch (pro residues) spans Ser1203–Pro1224. Residues Arg1245–Arg1256 are compositionally biased toward basic and acidic residues. Arg1257 is modified (asymmetric dimethylarginine). A Phosphoserine modification is found at Ser1291. Disordered stretches follow at residues Gly1308 to Ser1331, Leu1361 to Leu1417, Arg1429 to Ala1458, Phe1500 to Ala1725, Gly1740 to Ser1790, Val1828 to Ala1866, Pro1898 to His1988, and Arg2002 to Leu2029. Over residues Ala1363–Ser1372 the composition is skewed to basic and acidic residues. A compositionally biased stretch (pro residues) spans Pro1378–Thr1395. A compositionally biased stretch (basic residues) spans Leu1396–His1408. An Omega-N-methylarginine modification is found at Arg1429. Ser1442 carries the post-translational modification Phosphoserine. A compositionally biased stretch (low complexity) spans Arg1530 to Arg1541. Pro residues predominate over residues Pro1589–Ala1615. Residues Asp1624–Thr1641 show a composition bias toward polar residues. A compositionally biased stretch (pro residues) spans Pro1648–Gly1676. A compositionally biased stretch (basic and acidic residues) spans Val1684–Leu1694. Low complexity predominate over residues Glu1695 to Ala1708. Over residues Glu1709–Val1724 the composition is skewed to gly residues. Pro residues predominate over residues Pro1850–Leu1861. Arg1901 carries the omega-N-methylarginine modification. 3 stretches are compositionally biased toward low complexity: residues Ser1934–Ser1945, Thr1960–Ser1985, and Arg2002–Ala2012. 3 positions are modified to omega-N-methylarginine: Arg2022, Arg2042, and Arg2080. Residues Trp2104–Arg2167 enclose the SAM domain.

This sequence belongs to the SHANK family. As to quaternary structure, may homomultimerize via its SAM domain. Interacts with the C-terminus of SSTR2 via the PDZ domain. Interacts with SHARPIN, SPTAN1, HOMER1 and DLGAP1/GKAP. Part of a complex with DLG4/PSD-95 and DLGAP1/GKAP. Interacts with BAIAP2. Interacts with IGSF9. Interacts with HOMER1 and HOMER3. As to expression, in brain, highly expressed in cortex, hippocampus and cerebellum.

The protein localises to the cytoplasm. The protein resides in the synapse. Its subcellular location is the postsynaptic density. Seems to be an adapter protein in the postsynaptic density (PSD) of excitatory synapses that interconnects receptors of the postsynaptic membrane including NMDA-type and metabotropic glutamate receptors, and the actin-based cytoskeleton. Plays a role in the structural and functional organization of the dendritic spine and synaptic junction. Overexpression promotes maturation of dendritic spines and the enlargement of spine heads via its ability to recruit Homer to postsynaptic sites, and enhances presynaptic function. This is SH3 and multiple ankyrin repeat domains protein 1 (Shank1) from Mus musculus (Mouse).